A 416-amino-acid polypeptide reads, in one-letter code: UPF0761 membrane protein Rfer_2991 (416 aa).

Transmembrane regions (helical) follow at residues 60–80 (MALVPLVTVALAIFTAFPMFA), 117–137 (LGGAGIALLLVTAVALILTID), 156–176 (VLVYWAALTLGPLVLGVSLSI), 187–207 (VVGVMPGGVQFLLDVLQFFMV), 222–242 (WVKWSHAWAGGMFVSAGLELA), and 268–288 (ILLIWIYVAWIIVLLGAVIAA).

The protein belongs to the UPF0761 family.

The protein localises to the cell inner membrane. This chain is UPF0761 membrane protein Rfer_2991, found in Albidiferax ferrireducens (strain ATCC BAA-621 / DSM 15236 / T118) (Rhodoferax ferrireducens).